A 462-amino-acid polypeptide reads, in one-letter code: Prenyltransferase phqI (462 aa).

E101 is a binding site for brevianamide F. Dimethylallyl diphosphate contacts are provided by R117, K204, Y206, K273, Y275, Y357, Y442, and Y446.

It belongs to the tryptophan dimethylallyltransferase family.

The protein operates within alkaloid biosynthesis. Prenyltransferase; part of the gene cluster that mediates the biosynthesis of paraherquamide, a fungal indole alkaloid that belongs to a family of natural products containing a characteristic bicyclo[2.2.2]diazaoctane core. The first steps in the biosynthesis of paraherquamide is the production of the beta-methyl-proline precursor from L-isoleucine. They require oxidation of a terminally hydroxylated L-isoleucine to the corresponding aldehyde by enzymes which have still to be identified. Spontaneous cyclization and dehydration would yield the 4-methyl pyrolline-5-carboxylic acid, which is then reduced by the pyrroline-5-carboxylate reductase phqD leading to the beta-methyl-proline precursor. The next step of paraherquamide biosynthesis involves coupling of beta-methyl-proline and L-tryptophan by the bimodular NRPS phqB, to produce a monooxopiperazine intermediate. The reductase (R) domain of phqB utilizes NADPH for hydride transfer to reduce the thioester bond of the T domain-tethered linear dipeptide to a hemithioaminal intermediate, which spontaneously cleaves the C-S bond to release the aldehyde product. This compound undergoes spontaneous cyclization and dehydration to give a dienamine which is reverse prenylated at C-2 by the reverse prenyltransferase phqJ. The other prenyltransferase present in the cluster, phqI may be a redundant gene in the pathway. During biosynthetic assembly, the key step to produce the polycyclic core is catalyzed by the bifunctional reductase and intramolecular [4+2] Diels-Alderase, phqE, resulting in formation of the [2.2.2] diazaoctane intermediate preparaherquamide. Following formation of preparaherquamide, an indole 2,3-epoxidation-initiated pinacol-like rearrangement is catalyzed by the phqK FAD-dependent monooxygenase. The prenyltransferase phqA, the cytochrome P450 monooxygenase phqL, and the FAD-linked oxidoreductase phqH (or the cytochrome P450 monooxygenase phqM), are proposed to be involved in the formation of the pyran ring. The FAD-dependent monooxygenase phqK is likely responsible for generation of the spiro-oxindole, and the N-methylation is likely mediated by the phqN methyltransferase leading to the isolable natural product paraherquamide F. However, the order of these biosynthetic steps has still to be determined. In late-stage paraherquamide biosynthesis, the third P450 monooxygenase, phqO, is probably responsible for the C-14 hydroxylation, transforming paraherquamide F to paraherquamide G, and paraherquamide E to the final product paraherquamide A. The expansion from the 6-membered ring pyran (in paraherquamides F and G) to the 7-membered dioxepin ring (in paraherquamides A and E) represents a poorly understood but intriguing process that probably involves the 2-oxoglutarate-dependent dioxygenase phqC. Finally, the remaining members of the paraherquamide cluster, including phqI as well as phqM (or phqH), do not have a clearly prescribed role and appear to be redundant. This is Prenyltransferase phqI from Penicillium fellutanum.